We begin with the raw amino-acid sequence, 203 residues long: FMN-dependent NADH:quinone oxidoreductase 1 (203 aa).

FMN-binding positions include Ser-9, 15 to 17 (SAS), 95 to 98 (MYNF), and 139 to 142 (TAGG).

Belongs to the azoreductase type 1 family. In terms of assembly, homodimer. Requires FMN as cofactor.

It catalyses the reaction 2 a quinone + NADH + H(+) = 2 a 1,4-benzosemiquinone + NAD(+). The catalysed reaction is N,N-dimethyl-1,4-phenylenediamine + anthranilate + 2 NAD(+) = 2-(4-dimethylaminophenyl)diazenylbenzoate + 2 NADH + 2 H(+). In terms of biological role, quinone reductase that provides resistance to thiol-specific stress caused by electrophilic quinones. Its function is as follows. Also exhibits azoreductase activity. Catalyzes the reductive cleavage of the azo bond in aromatic azo compounds to the corresponding amines. This is FMN-dependent NADH:quinone oxidoreductase 1 from Pseudomonas putida (strain ATCC 47054 / DSM 6125 / CFBP 8728 / NCIMB 11950 / KT2440).